A 253-amino-acid chain; its full sequence is LexA repressor (253 aa).

The segment at Met1–Arg33 is disordered. The segment at residues Val54–Lys74 is a DNA-binding region (H-T-H motif). Active-site for autocatalytic cleavage activity residues include Ser177 and Lys214.

This sequence belongs to the peptidase S24 family. As to quaternary structure, homodimer.

It carries out the reaction Hydrolysis of Ala-|-Gly bond in repressor LexA.. In terms of biological role, represses a number of genes involved in the response to DNA damage (SOS response), including recA and lexA. In the presence of single-stranded DNA, RecA interacts with LexA causing an autocatalytic cleavage which disrupts the DNA-binding part of LexA, leading to derepression of the SOS regulon and eventually DNA repair. This chain is LexA repressor, found in Frankia alni (strain DSM 45986 / CECT 9034 / ACN14a).